We begin with the raw amino-acid sequence, 324 residues long: Elongation factor P--(R)-beta-lysine ligase (324 aa).

Residue 75–77 coordinates substrate; sequence SPE. ATP is bound by residues 99 to 101 and N108; that span reads RNQ. Residue Y117 coordinates substrate. 243 to 244 provides a ligand contact to ATP; sequence EL. E250 contributes to the substrate binding site. G299 contacts ATP.

The protein belongs to the class-II aminoacyl-tRNA synthetase family. EpmA subfamily. In terms of assembly, homodimer.

It carries out the reaction D-beta-lysine + L-lysyl-[protein] + ATP = N(6)-((3R)-3,6-diaminohexanoyl)-L-lysyl-[protein] + AMP + diphosphate + H(+). With EpmB is involved in the beta-lysylation step of the post-translational modification of translation elongation factor P (EF-P). Catalyzes the ATP-dependent activation of (R)-beta-lysine produced by EpmB, forming a lysyl-adenylate, from which the beta-lysyl moiety is then transferred to the epsilon-amino group of a conserved specific lysine residue in EF-P. In Buchnera aphidicola subsp. Schizaphis graminum (strain Sg), this protein is Elongation factor P--(R)-beta-lysine ligase.